A 204-amino-acid polypeptide reads, in one-letter code: Dephospho-CoA kinase (204 aa).

One can recognise a DPCK domain in the interval 3 to 204; the sequence is VIGLTGGIGS…DRLDLAYRAH (202 aa). Position 11–16 (11–16) interacts with ATP; it reads GSGKSY.

It belongs to the CoaE family.

Its subcellular location is the cytoplasm. The catalysed reaction is 3'-dephospho-CoA + ATP = ADP + CoA + H(+). The protein operates within cofactor biosynthesis; coenzyme A biosynthesis; CoA from (R)-pantothenate: step 5/5. Catalyzes the phosphorylation of the 3'-hydroxyl group of dephosphocoenzyme A to form coenzyme A. The chain is Dephospho-CoA kinase from Ralstonia nicotianae (strain ATCC BAA-1114 / GMI1000) (Ralstonia solanacearum).